Here is a 501-residue protein sequence, read N- to C-terminus: Ribose import ATP-binding protein RbsA (501 aa).

ABC transporter domains follow at residues 5-241 (LQLQ…VGRK) and 252-495 (APGE…VGKQ). 37–44 (GENGAGKS) lines the ATP pocket.

This sequence belongs to the ABC transporter superfamily. Ribose importer (TC 3.A.1.2.1) family. The complex is composed of an ATP-binding protein (RbsA), two transmembrane proteins (RbsC) and a solute-binding protein (RbsB).

Its subcellular location is the cell inner membrane. The enzyme catalyses D-ribose(out) + ATP + H2O = D-ribose(in) + ADP + phosphate + H(+). Part of the ABC transporter complex RbsABC involved in ribose import. Responsible for energy coupling to the transport system. This is Ribose import ATP-binding protein RbsA from Pectobacterium atrosepticum (strain SCRI 1043 / ATCC BAA-672) (Erwinia carotovora subsp. atroseptica).